A 317-amino-acid chain; its full sequence is uncharacterized protein (317 aa).

6 consecutive transmembrane segments (helical) span residues 14-34, 72-92, 119-139, 196-216, 230-250, and 291-307; these read IPLL…ATVS, LIGF…YGAV, LLFG…LDIA, TLLN…FCKQ, LFLG…ADVL, and SNML…WYTY. 3 Solcar repeats span residues 18 to 103, 113 to 217, and 224 to 313; these read SNDL…LKQR, LENH…CKQK, and LTAF…VSKM.

It belongs to the mitochondrial carrier (TC 2.A.29) family.

It localises to the mitochondrion inner membrane. This is an uncharacterized protein from Schizosaccharomyces pombe (strain 972 / ATCC 24843) (Fission yeast).